The following is a 197-amino-acid chain: Fe/S biogenesis protein NfuA (197 aa).

[4Fe-4S] cluster contacts are provided by C155 and C158.

Belongs to the NfuA family. Homodimer. The cofactor is [4Fe-4S] cluster.

Functionally, involved in iron-sulfur cluster biogenesis. Binds a 4Fe-4S cluster, can transfer this cluster to apoproteins, and thereby intervenes in the maturation of Fe/S proteins. Could also act as a scaffold/chaperone for damaged Fe/S proteins. The chain is Fe/S biogenesis protein NfuA from Pseudomonas syringae pv. syringae (strain B728a).